The following is a 137-amino-acid chain: Glutamate mutase sigma subunit (137 aa).

Residues 3–137 (KKTIVLGVIG…ADLKKDLNIE (135 aa)) form the B12-binding domain. Residues 13-17 (SDCHA), H16, 61-63 (SSL), and 93-97 (NIVVG) contribute to the adenosylcob(III)alamin site.

This sequence belongs to the methylaspartate mutase GlmS subunit family. Heterotetramer composed of 2 epsilon subunits (GlmE) and 2 sigma subunits (GlmS). GlmE exists as a homodimer and GlmS as a monomer. Adenosylcob(III)alamin is required as a cofactor.

It carries out the reaction (2S,3S)-3-methyl-L-aspartate = L-glutamate. It participates in amino-acid degradation; L-glutamate degradation via mesaconate pathway; acetate and pyruvate from L-glutamate: step 1/4. Its activity is regulated as follows. Competitively inhibited by (2S,4S)-4-fluoroglutamate, 2-methyleneglutarate, (2R,3RS)-3-fluoroglutamate and (S)-3-methylitaconate. In terms of biological role, catalyzes the carbon skeleton rearrangement of L-glutamate to L-threo-3-methylaspartate ((2S,3S)-3-methylaspartate). This is Glutamate mutase sigma subunit from Clostridium cochlearium.